The primary structure comprises 66 residues: SPbeta prophage-derived uncharacterized protein YopM (66 aa).

The protein is SPbeta prophage-derived uncharacterized protein YopM (yopM) of Bacillus subtilis (strain 168).